The sequence spans 1254 residues: Structural polyprotein (1254 aa).

The interval 43-77 (LQAQQMQQLISAVSALTTKQNVKAPKGQRQKKQQK) is host transcription inhibition. The disordered stretch occupies residues 60-113 (TKQNVKAPKGQRQKKQQKPKEKKENQKKKPTQKKKQQQKPKPQAKKKKPGRRER). A Nuclear localization signal motif is present at residues 70-108 (QRQKKQQKPKEKKENQKKKPTQKKKQQQKPKPQAKKKKP). Basic residues predominate over residues 84-110 (NQKKKPTQKKKQQQKPKPQAKKKKPGR). The segment at 95–123 (QQQKPKPQAKKKKPGRRERMCMKIENDCI) is binding to the viral RNA. Residues 108 to 122 (PGRRERMCMKIENDC) form a ribosome-binding region. Cysteine 122 and cysteine 137 are oxidised to a cystine. The 149-residue stretch at 122 to 270 (CIFEVKLDGK…RVTPEGTEEW (149 aa)) folds into the Peptidase S3 domain. The active-site Charge relay system is the histidine 148. The short motif at 153–163 (IDNPDLAKLTY) is the Nuclear export signal element. The interval 164-169 (KKSSKY) is interaction with spike glycoprotein E2. Aspartate 170 functions as the Charge relay system in the catalytic mechanism. Positions 192–202 (PEGHYNWHHGA) are dimerization of the capsid protein. Serine 222 (charge relay system) is an active-site residue. Residues 228-232 (DNKGR) are dimerization of the capsid protein. Residues 271–282 (SAALMMCILANT) are functions as an uncleaved signal peptide for the precursor of protein E3/E2. Residues 271–694 (SAALMMCILA…PHEIIQYYYG (424 aa)) are Extracellular-facing. Cystine bridges form between cysteine 277/cysteine 286, cysteine 291/cysteine 295, and cysteine 294/cysteine 326. N-linked (GlcNAc...) asparagine; by host glycosylation is present at asparagine 281. Asparagine 328 is a glycosylation site (N-linked (GlcNAc...) asparagine; by host). Cystine bridges form between cysteine 353-cysteine 459, cysteine 356-cysteine 362, cysteine 425-cysteine 439, cysteine 487-cysteine 599, cysteine 535-cysteine 559, and cysteine 537-cysteine 554. 2 interaction with host Mxra8 receptor regions span residues 360-363 (YFCY) and 396-398 (HAH). An interaction with host Mxra8 receptor region spans residues 518 to 521 (TAGN). Asparagine 534 carries N-linked (GlcNAc...) asparagine; by host glycosylation. The segment at 550–556 (TINTCKI) is interaction with host Mxra8 receptor. N-linked (GlcNAc...) asparagine; by host glycosylation occurs at asparagine 596. A helical transmembrane segment spans residues 695 to 715 (LYPAATIAAVSGASLMALLTL). Residues 716 to 756 (AATCCMLATARRKCLTPYALTPGAVVPLTLGLLCCAPRANA) lie on the Cytoplasmic side of the membrane. Cysteine 719 carries the S-palmitoyl cysteine; by host lipid modification. The interval 724 to 728 (TARRK) is interaction with the capsid protein. S-palmitoyl cysteine; by host attachment occurs at residues cysteine 729, cysteine 749, and cysteine 750. Residues 729–749 (CLTPYALTPGAVVPLTLGLLC) form a transient transmembrane before p62-6K protein processing region. Cysteine 729 and cysteine 750 are oxidised to a cystine. Residues 757-771 (ASFAETMAYLWDENK) are Extracellular-facing. Residues 772–792 (TLFWMEFAAPAAALALLACCI) form a helical membrane-spanning segment. Residue lysine 793 is a topological domain, cytoplasmic. Residues 794–814 (SLICCCKPFSFLVLLSLGASA) form a helical membrane-spanning segment. Over 815–1231 (KAYEHTATIP…AMTWVQRLAS (417 aa)) the chain is Extracellular. Intrachain disulfides connect cysteine 865-cysteine 930, cysteine 878-cysteine 910, cysteine 879-cysteine 912, and cysteine 884-cysteine 894. Residues 900 to 917 (VYPFMWGGAYCFCDSENT) form an E1 fusion peptide loop region. A glycan (N-linked (GlcNAc...) asparagine; by host) is linked at asparagine 957. 4 cysteine pairs are disulfide-bonded: cysteine 1075–cysteine 1087, cysteine 1117–cysteine 1192, cysteine 1122–cysteine 1196, and cysteine 1144–cysteine 1186. The chain crosses the membrane as a helical span at residues 1232–1252 (GLGGLALIAVVVLVLVTCITM). A lipid anchor (S-palmitoyl cysteine; by host) is attached at cysteine 1249. A lipid anchor (S-stearoyl cysteine; by host) is attached at cysteine 1249. Residues 1253 to 1254 (RR) lie on the Cytoplasmic side of the membrane.

Homodimer. Homomultimer. Interacts with host karyopherin KPNA4; this interaction allows the nuclear import of the viral capsid protein. Interacts with spike glycoprotein E2. Interacts with host IRAK1; the interaction leads to inhibition of IRAK1-dependent signaling. In terms of assembly, the precursor of protein E3/E2 and E1 form a heterodimer shortly after synthesis. As to quaternary structure, interacts with spike glycoprotein E2. The precursor of protein E3/E2 and E1 form a heterodimer shortly after synthesis. Processing of the precursor of protein E3/E2 into E2 and E3 results in a heterodimer of the spike glycoproteins E2 and E1. Spike at virion surface are constituted of a trimer of E2-E1 heterodimers. After target cell attachment and endocytosis, E1 change conformation to form homotrimers. Interacts with 6K protein. E1/E2 heterodimer interacts with host LDLR. Interacts with spike glycoprotein E1. Processing of the precursor of protein E3/E2 into E2 and E3 results in a heterodimer of the spike glycoproteins E2 and E1. Spike at virion surface are constituted of a trimer of E2-E1 heterodimers. Interacts with 6K protein. Interacts with host MXRA8; this interaction mediates virus entry. In terms of assembly, oligomer. Interacts with spike glycoprotein E1. Interacts with spike glycoprotein E2. Post-translationally, structural polyprotein: Specific enzymatic cleavages in vivo yield mature proteins. Capsid protein is auto-cleaved during polyprotein translation, unmasking a signal peptide at the N-terminus of the precursor of E3/E2. The remaining polyprotein is then targeted to the host endoplasmic reticulum, where host signal peptidase cleaves it into pE2, 6K and E1 proteins. pE2 is further processed to mature E3 and E2 by host furin in trans-Golgi vesicle. In terms of processing, palmitoylated via thioester bonds. These palmitoylations may induce disruption of the C-terminus transmembrane. This would result in the reorientation of E2 C-terminus from lumenal to cytoplasmic side. N-glycosylated. Post-translationally, palmitoylated via thioester bonds.

The protein localises to the virion. Its subcellular location is the host cytoplasm. It localises to the host cell membrane. It is found in the host nucleus. The protein resides in the virion membrane. The protein localises to the host Golgi apparatus. Its subcellular location is the host trans-Golgi network. It localises to the host endoplasmic reticulum. It catalyses the reaction Autocatalytic release of the core protein from the N-terminus of the togavirus structural polyprotein by hydrolysis of a -Trp-|-Ser- bond.. Its function is as follows. Forms an icosahedral capsid with a T=4 symmetry composed of 240 copies of the capsid protein surrounded by a lipid membrane through which penetrate 80 spikes composed of trimers of E1-E2 heterodimers. The capsid protein binds to the viral RNA genome at a site adjacent to a ribosome binding site for viral genome translation following genome release. Possesses a protease activity that results in its autocatalytic cleavage from the nascent structural protein. Following its self-cleavage, the capsid protein transiently associates with ribosomes, and within several minutes the protein binds to viral RNA and rapidly assembles into icosahedric core particles. The resulting nucleocapsid eventually associates with the cytoplasmic domain of the spike glycoprotein E2 at the cell membrane, leading to budding and formation of mature virions. In case of infection, new virions attach to target cells and after clathrin-mediated endocytosis their membrane fuses with the host endosomal membrane. This leads to the release of the nucleocapsid into the cytoplasm, followed by an uncoating event necessary for the genomic RNA to become accessible. The uncoating might be triggered by the interaction of capsid proteins with ribosomes. Binding of ribosomes would release the genomic RNA since the same region is genomic RNA-binding and ribosome-binding. Specifically inhibits interleukin-1 receptor-associated kinase 1/IRAK1-dependent signaling during viral entry, representing a means by which the alphaviruses may evade innate immune detection and activation prior to viral gene expression. In terms of biological role, provides the signal sequence for the translocation of the precursor of protein E3/E2 to the host endoplasmic reticulum. Furin-cleaved E3 remains associated with spike glycoprotein E1 and mediates pH protection of the latter during the transport via the secretory pathway. After virion release from the host cell, the assembly protein E3 is gradually released in the extracellular space. Plays a role in viral attachment to target host cell, by binding to the cell receptor MXRA8. The host LDLR may also act as a cell receptor for viral entry. Synthesized as a p62 precursor which is processed by furin at the cell membrane just before virion budding, giving rise to E2-E1 heterodimer. The p62-E1 heterodimer is stable, whereas E2-E1 is unstable and dissociate at low pH. p62 is processed at the last step, presumably to avoid E1 fusion activation before its final export to cell surface. E2 C-terminus contains a transitory transmembrane that would be disrupted by palmitoylation, resulting in reorientation of the C-terminal tail from lumenal to cytoplasmic side. This step is critical since E2 C-terminus is involved in budding by interacting with capsid proteins. This release of E2 C-terminus in cytoplasm occurs lately in protein export, and precludes premature assembly of particles at the endoplasmic reticulum membrane. Functionally, acts as a viroporin that participates in virus glycoprotein processing and transport to the plasma membrane, cell permeabilization and budding of viral particles. The cation channel is permeable to Na(+)&gt;K(+)&gt;Ca(2+) in vitro. Disrupts the calcium homeostasis of the cell, probably at the endoplasmic reticulum level. This leads to cytoplasmic calcium elevation. Because of its lipophilic properties, the 6K protein is postulated to influence the selection of lipids that interact with the transmembrane domains of the glycoproteins, which, in turn, affects the deformability of the bilayer required for the extreme curvature that occurs as budding proceeds. Present in low amount in virions, about 3% compared to viral glycoproteins. Its function is as follows. Class II viral fusion protein. Fusion activity is inactive as long as E1 is bound to E2 in mature virion. After virus attachment to target cell via host MXRA8 and endocytosis, acidification of the endosome induce dissociation of E1/E2 heterodimer and concomitant trimerization of the E1 subunits. This E1 trimer is fusion active, and promotes release of viral nucleocapsid in cytoplasm after endosome and viral membrane fusion. Efficient fusion requires the presence of cholesterol and sphingolipid in the target membrane. This Aedes (Common banded mosquito) protein is Structural polyprotein.